Here is a 152-residue protein sequence, read N- to C-terminus: Xanthine-guanine phosphoribosyltransferase (152 aa).

Residues 37-38, Arg-69, and 88-96 each bind 5-phospho-alpha-D-ribose 1-diphosphate; these read RG and DDLVDTGGT. Arg-69 provides a ligand contact to GMP. Asp-89 provides a ligand contact to Mg(2+). Residues Asp-92 and Ile-135 each contribute to the guanine site. Xanthine is bound by residues Asp-92 and Ile-135. Residues 92–96 and 134–135 contribute to the GMP site; these read DTGGT and WI.

Belongs to the purine/pyrimidine phosphoribosyltransferase family. XGPT subfamily. Homotetramer. The cofactor is Mg(2+).

The protein resides in the cell inner membrane. The catalysed reaction is GMP + diphosphate = guanine + 5-phospho-alpha-D-ribose 1-diphosphate. It catalyses the reaction XMP + diphosphate = xanthine + 5-phospho-alpha-D-ribose 1-diphosphate. It carries out the reaction IMP + diphosphate = hypoxanthine + 5-phospho-alpha-D-ribose 1-diphosphate. It functions in the pathway purine metabolism; GMP biosynthesis via salvage pathway; GMP from guanine: step 1/1. The protein operates within purine metabolism; XMP biosynthesis via salvage pathway; XMP from xanthine: step 1/1. Functionally, purine salvage pathway enzyme that catalyzes the transfer of the ribosyl-5-phosphate group from 5-phospho-alpha-D-ribose 1-diphosphate (PRPP) to the N9 position of the 6-oxopurines guanine and xanthine to form the corresponding ribonucleotides GMP (guanosine 5'-monophosphate) and XMP (xanthosine 5'-monophosphate), with the release of PPi. To a lesser extent, also acts on hypoxanthine. The protein is Xanthine-guanine phosphoribosyltransferase of Erwinia tasmaniensis (strain DSM 17950 / CFBP 7177 / CIP 109463 / NCPPB 4357 / Et1/99).